The sequence spans 33 residues: MPRRRRSSSRPVRRRRRPRVSRRRRRRGGRRRR.

The disordered stretch occupies residues 1–33; that stretch reads MPRRRRSSSRPVRRRRRPRVSRRRRRRGGRRRR.

As to expression, testis.

The protein localises to the nucleus. It is found in the chromosome. Its function is as follows. Protamines substitute for histones in the chromatin of sperm during the haploid phase of spermatogenesis. They compact sperm DNA into a highly condensed, stable and inactive complex. The sequence is that of Protamine from Oncorhynchus keta (Chum salmon).